A 111-amino-acid polypeptide reads, in one-letter code: MTSTRKLSVSCLIVFMVSSLIAVSSGWLSSTGKSPLKIGKCDPKNGNLYAIGRKWYNDEDCFEITCIQGDKGSVAQQVASCPVHAVKPGCELVFPGGTYPKCCPYYECPNS.

A signal peptide spans 1–26 (MTSTRKLSVSCLIVFMVSSLIAVSSG).

The protein belongs to the scoloptoxin-16 family. Contains 4 disulfide bonds. As to expression, expressed by the venom gland.

It is found in the secreted. The polypeptide is U-scoloptoxin(16)-Er8a (Ethmostigmus rubripes (Giant centipede)).